The chain runs to 443 residues: Ribulose bisphosphate carboxylase large chain (443 aa).

Residues Asn89 and Thr139 each contribute to the substrate site. Lys141 serves as the catalytic Proton acceptor. Position 143 (Lys143) interacts with substrate. Lys167, Asp169, and Glu170 together coordinate Mg(2+). Lys167 carries the N6-carboxylysine modification. Catalysis depends on His260, which acts as the Proton acceptor. Residues Arg261, His293, and Ser345 each coordinate substrate.

This sequence belongs to the RuBisCO large chain family. Type I subfamily. As to quaternary structure, heterohexadecamer of 8 large chains and 8 small chains; disulfide-linked. The disulfide link is formed within the large subunit homodimers. Mg(2+) is required as a cofactor. Post-translationally, the disulfide bond which can form in the large chain dimeric partners within the hexadecamer appears to be associated with oxidative stress and protein turnover.

The protein resides in the plastid. It is found in the chloroplast. It catalyses the reaction 2 (2R)-3-phosphoglycerate + 2 H(+) = D-ribulose 1,5-bisphosphate + CO2 + H2O. It carries out the reaction D-ribulose 1,5-bisphosphate + O2 = 2-phosphoglycolate + (2R)-3-phosphoglycerate + 2 H(+). Functionally, ruBisCO catalyzes two reactions: the carboxylation of D-ribulose 1,5-bisphosphate, the primary event in carbon dioxide fixation, as well as the oxidative fragmentation of the pentose substrate in the photorespiration process. Both reactions occur simultaneously and in competition at the same active site. The protein is Ribulose bisphosphate carboxylase large chain of Callitriche heterophylla (Large water-starwort).